A 71-amino-acid polypeptide reads, in one-letter code: Small ribosomal subunit protein bS21 (71 aa).

This sequence belongs to the bacterial ribosomal protein bS21 family.

This is Small ribosomal subunit protein bS21 from Chromohalobacter salexigens (strain ATCC BAA-138 / DSM 3043 / CIP 106854 / NCIMB 13768 / 1H11).